A 217-amino-acid chain; its full sequence is Probable transaldolase (217 aa).

Residue lysine 83 is the Schiff-base intermediate with substrate of the active site.

Belongs to the transaldolase family. Type 3B subfamily.

It is found in the cytoplasm. It carries out the reaction D-sedoheptulose 7-phosphate + D-glyceraldehyde 3-phosphate = D-erythrose 4-phosphate + beta-D-fructose 6-phosphate. The protein operates within carbohydrate degradation; pentose phosphate pathway; D-glyceraldehyde 3-phosphate and beta-D-fructose 6-phosphate from D-ribose 5-phosphate and D-xylulose 5-phosphate (non-oxidative stage): step 2/3. In terms of biological role, transaldolase is important for the balance of metabolites in the pentose-phosphate pathway. This chain is Probable transaldolase, found in Clostridium botulinum (strain Loch Maree / Type A3).